A 202-amino-acid chain; its full sequence is Glycerol-3-phosphate acyltransferase (202 aa).

The next 4 helical transmembrane spans lie at 11–31 (VLIA…GLIL), 87–107 (PALA…WLGF), 116–136 (FIGV…AIWL), and 158–178 (LILW…LAAL).

The protein belongs to the PlsY family. In terms of assembly, probably interacts with PlsX.

The protein localises to the cell inner membrane. The catalysed reaction is an acyl phosphate + sn-glycerol 3-phosphate = a 1-acyl-sn-glycero-3-phosphate + phosphate. The protein operates within lipid metabolism; phospholipid metabolism. Its function is as follows. Catalyzes the transfer of an acyl group from acyl-phosphate (acyl-PO(4)) to glycerol-3-phosphate (G3P) to form lysophosphatidic acid (LPA). This enzyme utilizes acyl-phosphate as fatty acyl donor, but not acyl-CoA or acyl-ACP. In Methylorubrum extorquens (strain PA1) (Methylobacterium extorquens), this protein is Glycerol-3-phosphate acyltransferase.